Consider the following 359-residue polypeptide: MKATIILLLLAQVSWAGPFQQRGLFDFMLEDEASGIGPEVPDDRDFEPSLGPVCPFRCQCHLRVVQCSDLGLDKVPKDLPPDTTLLDLQNNKITEIKDGDFKNLKNLHALILVNNKISKVSPGAFTPLVKLERLYLSKNQLKELPEKMPKTLQELRAHENEITKVRKVTFNGLNQMIVIELGTNPLKSSGIENGAFQGMKKLSYIRIADTNITSIPQGLPPSLTELHLDGNKISRVDAASLKGLNNLAKLGLSFNSISAVDNGSLANTPHLRELHLDNNKLTRVPGGLAEHKYIQVVYLHNNNISVVGSSDFCPPGHNTKKASYSGVSLFSNPVQYWEIQPSTFRCVYVRSAIQLGNYK.

An N-terminal signal peptide occupies residues 1–16; sequence MKATIILLLLAQVSWA. A propeptide spanning residues 17–30 is cleaved from the precursor; sequence GPFQQRGLFDFMLE. Residue Ser-34 is glycosylated (O-linked (Xyl...) (glycosaminoglycan) serine). 2 disulfides stabilise this stretch: Cys-54/Cys-60 and Cys-58/Cys-67. 12 LRR repeats span residues 73 to 93, 94 to 117, 118 to 141, 142 to 162, 163 to 186, 187 to 212, 213 to 233, 234 to 257, 258 to 281, 282 to 304, 305 to 334, and 335 to 359; these read DKVPKDLPPDTTLLDLQNNKI, TEIKDGDFKNLKNLHALILVNNKI, SKVSPGAFTPLVKLERLYLSKNQL, KELPEKMPKTLQELRAHENEI, TKVRKVTFNGLNQMIVIELGTNPL, KSSGIENGAFQGMKKLSYIRIADTNI, TSIPQGLPPSLTELHLDGNKI, SRVDAASLKGLNNLAKLGLSFNSI, SAVDNGSLANTPHLRELHLDNNKL, TRVPGGLAEHKYIQVVYLHNNNI, SVVGSSDFCPPGHNTKKASYSGVSLFSNPV, and QYWEIQPSTFRCVYVRSAIQLGNYK. Asn-211 carries N-linked (GlcNAc...) asparagine glycosylation. Asn-262 and Asn-303 each carry an N-linked (GlcNAc...) asparagine glycan. Cys-313 and Cys-346 are disulfide-bonded.

It belongs to the small leucine-rich proteoglycan (SLRP) family. SLRP class I subfamily. As to quaternary structure, binds to type I and type II collagen, fibronectin and TGF-beta. Forms a ternary complex with MFAP2 and ELN. Interacts with DPT. Post-translationally, the attached glycosaminoglycan chain can be either chondroitin sulfate or dermatan sulfate depending upon the tissue of origin. Detected in placenta (at protein level). Detected in cerebrospinal fluid, fibroblasts and urine (at protein level).

Its subcellular location is the secreted. The protein localises to the extracellular space. It localises to the extracellular matrix. Functionally, may affect the rate of fibrils formation. The sequence is that of Decorin (DCN) from Homo sapiens (Human).